Here is a 410-residue protein sequence, read N- to C-terminus: Phospho-N-acetylmuramoyl-pentapeptide-transferase (410 aa).

10 consecutive transmembrane segments (helical) span residues 23 to 43 (YITFRSALAFMLSLLLSTIYG), 73 to 93 (TPTMGGLIIIFATLVPVFLFA), 96 to 116 (HNIYIVLLIVTTLWMGTIGFV), 132 to 152 (GIFKVIGQVGLGIIVGAVLYF), 215 to 235 (WAWLVFIPVVIFIITAVSNGA), 248 to 268 (TSAVSVLALGIFTFVSGNIIF), 285 to 305 (VFISAFVGALIGFLWYNSFPA), 307 to 327 (VFMGDTGSLTIGGIIAVLAIA), 332 to 352 (ILIVLFCGIFLAESASVIIQV), and 387 to 407 (KIVTRFWIVAVMLAILSIVTL).

This sequence belongs to the glycosyltransferase 4 family. MraY subfamily. It depends on Mg(2+) as a cofactor.

The protein resides in the cell inner membrane. It carries out the reaction UDP-N-acetyl-alpha-D-muramoyl-L-alanyl-gamma-D-glutamyl-meso-2,6-diaminopimeloyl-D-alanyl-D-alanine + di-trans,octa-cis-undecaprenyl phosphate = di-trans,octa-cis-undecaprenyl diphospho-N-acetyl-alpha-D-muramoyl-L-alanyl-D-glutamyl-meso-2,6-diaminopimeloyl-D-alanyl-D-alanine + UMP. It functions in the pathway cell wall biogenesis; peptidoglycan biosynthesis. Catalyzes the initial step of the lipid cycle reactions in the biosynthesis of the cell wall peptidoglycan: transfers peptidoglycan precursor phospho-MurNAc-pentapeptide from UDP-MurNAc-pentapeptide onto the lipid carrier undecaprenyl phosphate, yielding undecaprenyl-pyrophosphoryl-MurNAc-pentapeptide, known as lipid I. This chain is Phospho-N-acetylmuramoyl-pentapeptide-transferase, found in Flavobacterium johnsoniae (strain ATCC 17061 / DSM 2064 / JCM 8514 / BCRC 14874 / CCUG 350202 / NBRC 14942 / NCIMB 11054 / UW101) (Cytophaga johnsonae).